We begin with the raw amino-acid sequence, 478 residues long: MSPKTETKASVGFKAGVKDYKLTYYTPDYETKDTDILAAFRVTPQPGVPPEEAGAAVAAESSTGTWTTVWTDGLTSLDRYKGRCYHIEPVAGEEDQYIAYVAYPLDLFEEGSVTNMFTSIVGNVFGFKALRALRLEDLRIPTAYVKTFQGPPHGIQVERDKLNKYGRPLLGCTIKPKLGLSAKNYGRAVYECLRGGLDFTKDDENVNSQPFMRWRDRFLFCAEALYKAQAETGEIKGHYLNATAGTCEEMMKRAVFARELGVPIVMHDYLTGGFTANTTLAHYCRDNGLLLHIHRAMHAVIDRQKNHGIHFRVLAKALRMSGGDHIHAGTVVGKLEGERDITLGFVDLLRDDFIQKDRSRGIYFTQDWVSMPGVLPVASGGIHVWHMPALTEIFGDDSVLQFGGGTLGHPWGNAPGAVANRVALEACVQARNEGRDLAREGNEIIREACKWSPELAAACEVWKEIKFEFKAVDTLDIL.

Residues 1-2 (MS) constitute a propeptide that is removed on maturation. P3 bears the N-acetylproline mark. K14 carries the N6,N6,N6-trimethyllysine modification. Substrate-binding residues include N123 and T173. K175 acts as the Proton acceptor in catalysis. K177 contacts substrate. Residues K201, D203, and E204 each contribute to the Mg(2+) site. K201 bears the N6-carboxylysine mark. H294 acts as the Proton acceptor in catalysis. Residues R295, H327, and S379 each coordinate substrate.

The protein belongs to the RuBisCO large chain family. Type I subfamily. Heterohexadecamer of 8 large chains and 8 small chains; disulfide-linked. The disulfide link is formed within the large subunit homodimers. The cofactor is Mg(2+). Post-translationally, the disulfide bond which can form in the large chain dimeric partners within the hexadecamer appears to be associated with oxidative stress and protein turnover.

It is found in the plastid. Its subcellular location is the chloroplast. The enzyme catalyses 2 (2R)-3-phosphoglycerate + 2 H(+) = D-ribulose 1,5-bisphosphate + CO2 + H2O. The catalysed reaction is D-ribulose 1,5-bisphosphate + O2 = 2-phosphoglycolate + (2R)-3-phosphoglycerate + 2 H(+). Its function is as follows. RuBisCO catalyzes two reactions: the carboxylation of D-ribulose 1,5-bisphosphate, the primary event in carbon dioxide fixation, as well as the oxidative fragmentation of the pentose substrate in the photorespiration process. Both reactions occur simultaneously and in competition at the same active site. The protein is Ribulose bisphosphate carboxylase large chain of Drimys granadensis.